A 129-amino-acid polypeptide reads, in one-letter code: MFSSFFGNTCSWVFIFIIIVDNEAFLHFSCLIFVFINIFVFLRGVKDIFSFFFLTRRFSFIVVIYYFFLVPRDQLRISRLFHKRQILCKDSRQLMTCSLGLFFKAQINIFLPPFALTVVQFLVNLVCHT.

A run of 3 helical transmembrane segments spans residues 15 to 35 (IFIIIVDNEAFLHFSCLIFVF), 48 to 68 (IFSFFFLTRRFSFIVVIYYFF), and 107 to 127 (INIFLPPFALTVVQFLVNLVC).

The protein localises to the membrane. This is an uncharacterized protein from Saccharomyces cerevisiae (strain ATCC 204508 / S288c) (Baker's yeast).